The sequence spans 635 residues: MTMELTGNELIKSKLIDIPERSGVYRMFDANKQVIYVGKAKNLKKRLTNYIKTDLDTKTLRMVANTCSLEYSITNSEVEALLLEAQLIKKFQPKFNILLKDDKSFPFIKLRLDHDFPQLLKYRGRALNDGKFFGPFASATEVNTTLSELQKIFKLRSCTDNYFNSRTRPCLQYEIKRCYAPCVGKINKKDYAELVGQVKDFLQGRSKELQENLSKKMEELSEQMRFEEAAEIRDRIKALSYVQLKAGITDIVKDADIIAIVEKNGHYCVEVFLYRIGQACGNIPYFPTSTENSTKEEVLKHFLLQFYQKQQVPPGIIINHEIDDKDNIIEAIRNINDFAKLSITIPASGGKLKLVQNAQENALFSLEQYLKKFAKNQELMFEVKELFNLPEIPERIEVYDNSHIQGKFAVGVMIVAGKSGFDKKEYRVFSLSSRDSITGSSKSTNNDSISCFLDTVDKPRYDTKGDDYEMLRQVLTRRLTRLKQEPHRLPSLMIIDGGKGHLGIVKEVMNKLQMDIPFVCMSKGPDRNAGLEQFHMVGREVFTLNKNLPLMKYLQILRDEAHNFAIKNHRLSRSRAIKVSSLDEIEGIGDTRKKALLHYFGSYKAVSDATLDELSKVKGISKSLAKMIFNALHKN.

One can recognise a GIY-YIG domain in the interval 20 to 97 (ERSGVYRMFD…IKKFQPKFNI (78 aa)). In terms of domain architecture, UVR spans 207-242 (KELQENLSKKMEELSEQMRFEEAAEIRDRIKALSYV).

Belongs to the UvrC family. Interacts with UvrB in an incision complex.

It is found in the cytoplasm. Functionally, the UvrABC repair system catalyzes the recognition and processing of DNA lesions. UvrC both incises the 5' and 3' sides of the lesion. The N-terminal half is responsible for the 3' incision and the C-terminal half is responsible for the 5' incision. This is UvrABC system protein C from Rickettsia bellii (strain RML369-C).